Reading from the N-terminus, the 291-residue chain is G1/S-specific cyclin-D2 (291 aa).

The disordered stretch occupies residues 261–291; that stretch reads TRQQTQQRNSSKSVDELDQASTPTDVQDINL. The span at 279–291 shows a compositional bias: polar residues; that stretch reads QASTPTDVQDINL. Thr-282 is modified (phosphothreonine).

Belongs to the cyclin family. Cyclin D subfamily. In terms of assembly, interacts with the cdk4 and cdk6 protein kinases to form a serine/threonine kinase holoenzyme complex. The cyclin subunit imparts substrate specificity to the complex. In terms of processing, phosphorylation at Thr-282 by MAP kinases is required for ubiquitination and degradation by the DCX(AMBRA1) complex. Post-translationally, ubiquitinated by the DCX(AMBRA1) complex during the transition from G1 to S cell phase, leading to its degradation: ubiquitination is dependent on Thr-282 phosphorylation. The DCX(AMBRA1) complex represents the major regulator of CCND2 stability during the G1/S transition.

The protein localises to the nucleus. Its subcellular location is the cytoplasm. It is found in the nucleus membrane. Regulatory component of the cyclin D2-CDK4 (DC) complex that phosphorylates and inhibits members of the retinoblastoma (RB) protein family including RB1 and regulates the cell-cycle during G(1)/S transition. Phosphorylation of RB1 allows dissociation of the transcription factor E2F from the RB/E2F complex and the subsequent transcription of E2F target genes which are responsible for the progression through the G(1) phase. Hypophosphorylates RB1 in early G(1) phase. Cyclin D-CDK4 complexes are major integrators of various mitogenenic and antimitogenic signals. This Xenopus laevis (African clawed frog) protein is G1/S-specific cyclin-D2 (ccnd2).